Reading from the N-terminus, the 901-residue chain is HTH-type transcriptional regulator MalT (901 aa).

39 to 46 (SPAGYGKT) lines the ATP pocket. One can recognise an HTH luxR-type domain in the interval 829–894 (ELIRTSPLTQ…AAVQHAQKLL (66 aa)). The H-T-H motif DNA-binding region spans 853–872 (NEQIAGELEVAATTIKTHIR).

Belongs to the MalT family. In terms of assembly, monomer in solution. Oligomerizes to an active state in the presence of the positive effectors ATP and maltotriose.

With respect to regulation, activated by ATP and maltotriose, which are both required for DNA binding. Its function is as follows. Positively regulates the transcription of the maltose regulon whose gene products are responsible for uptake and catabolism of malto-oligosaccharides. Specifically binds to the promoter region of its target genes, recognizing a short DNA motif called the MalT box. The sequence is that of HTH-type transcriptional regulator MalT from Shigella flexneri serotype 5b (strain 8401).